A 289-amino-acid polypeptide reads, in one-letter code: Mas-related G-protein coupled receptor member G (289 aa).

Residues 1-13 (MFSIFNIWGTFNK) lie on the Extracellular side of the membrane. A helical transmembrane segment spans residues 14 to 34 (VLFFLSLTVSLAGLVGNALLL). Over 35 to 52 (WHLGLHIKKGPFNTYLLH) the chain is Cytoplasmic. Residues 53 to 73 (LAAADFLFLSCQVGFSIATIV) form a helical membrane-spanning segment. At 74–78 (SGHED) the chain is on the extracellular side. A helical membrane pass occupies residues 79–99 (TLYFPVTFLWFAVGLWLLAAF). The Cytoplasmic portion of the chain corresponds to 100 to 120 (SVDCCLAYMFPSFCSPNRRPR). Residues 121–141 (FTSVVLCLVIWALTMPAVLLP) form a helical membrane-spanning segment. Residues 142–164 (ANACGLLKNGMSLLVCLKYHWTS) lie on the Extracellular side of the membrane. Residues 165-185 (VTWLAVLSGMACGASKFLLIF) traverse the membrane as a helical segment. The Cytoplasmic segment spans residues 186-199 (GNCCSSQPPPKFCK). A helical membrane pass occupies residues 200-220 (LAQCSGILLFFCRLPLVVYWC). Residues 221–222 (LR) are Extracellular-facing. A helical membrane pass occupies residues 223-243 (PVLKFLLPFFFPLATLLACID). Topologically, residues 244–289 (SSAKPLLYYMKGRQLRKDPLQVALNRALGEESQSGLGGLSLPMHQV) are cytoplasmic.

The protein belongs to the G-protein coupled receptor 1 family. Mas subfamily.

Its subcellular location is the cell membrane. In terms of biological role, orphan receptor. May regulate nociceptor function and/or development, including the sensation or modulation of pain. This chain is Mas-related G-protein coupled receptor member G (Mrgprg), found in Mus musculus (Mouse).